The following is a 44-amino-acid chain: SPbeta prophage-derived uncharacterized protein YosI (44 aa).

This is SPbeta prophage-derived uncharacterized protein YosI (yosI) from Bacillus subtilis (strain 168).